A 121-amino-acid chain; its full sequence is uncharacterized protein (121 aa).

3 helical membrane-spanning segments follow: residues 12-32 (MIGI…HPGV), 35-55 (VIQP…FGGL), and 67-87 (VFVV…YVGD).

Belongs to the sbp family.

It localises to the cell membrane. This is an uncharacterized protein from Mycobacterium bovis (strain ATCC BAA-935 / AF2122/97).